We begin with the raw amino-acid sequence, 63 residues long: Venom peptide 2a (63 aa).

A signal peptide spans Met1–Ala22. 5 AXPX repeats span residues Ala22–Leu25, Ala26–Ala29, Ala32–Asp35, Ala38–Asp41, and Ala44–Glu47. Residues Glu23–Ala48 constitute a propeptide that is removed on maturation. Residue Leu62 is modified to Leucine amide.

As to expression, expressed by the venom gland.

It localises to the secreted. The protein localises to the target cell membrane. Functionally, antimicrobial peptide. Shows activities against Gram-positive bacteria (S.aureus MIC=50 uM and 200 ug/ml, and B.subtilis MIC=200 ug/ml), Gram-negative bacterium E.coli (MIC=100 uM and 200 ug/ml) and fungi (B.cinerea MIC=5 uM, S.cerevisiae MIC=128 ug/ml, S.pombe MIC=128 ug/ml, A.nidulans MIC=128 ug/ml, and C.albicans MIC=64-100 uM). Shows cytolytic activity against insect cell lines. Its hemolytic activity is controversial, as Baek and colleagues report no activity while Bea and colleagues note a hemolytic activity. In vivo, peptide injection in the vicinity of the head and thorax of lepidopteran larvae induces feeding disorder followed by death due to starvation. Is weakly lethal when tested on water flies (D.magna), but is not lethal on lady beetles (H.convergens). The protein is Venom peptide 2a of Eumenes pomiformis (Potter wasp).